The following is a 91-amino-acid chain: Small ribosomal subunit protein bS18 (91 aa).

The protein belongs to the bacterial ribosomal protein bS18 family. Part of the 30S ribosomal subunit. Forms a tight heterodimer with protein bS6.

Its function is as follows. Binds as a heterodimer with protein bS6 to the central domain of the 16S rRNA, where it helps stabilize the platform of the 30S subunit. This Wolbachia pipientis wMel protein is Small ribosomal subunit protein bS18.